Consider the following 143-residue polypeptide: uncharacterized protein (143 aa).

This is an uncharacterized protein from Saccharomyces cerevisiae (strain ATCC 204508 / S288c) (Baker's yeast).